We begin with the raw amino-acid sequence, 382 residues long: Lipid-A-disaccharide synthase (382 aa).

The protein belongs to the LpxB family.

The catalysed reaction is 2-N,3-O-bis[(3R)-3-hydroxytetradecanoyl]-alpha-D-glucosaminyl 1-phosphate + UDP-2-N,3-O-bis[(3R)-3-hydroxytetradecanoyl]-alpha-D-glucosamine = lipid A disaccharide (E. coli) + UDP + H(+). It catalyses the reaction a lipid X + a UDP-2-N,3-O-bis[(3R)-3-hydroxyacyl]-alpha-D-glucosamine = a lipid A disaccharide + UDP + H(+). It participates in glycolipid biosynthesis; lipid IV(A) biosynthesis; lipid IV(A) from (3R)-3-hydroxytetradecanoyl-[acyl-carrier-protein] and UDP-N-acetyl-alpha-D-glucosamine: step 5/6. Condensation of UDP-2,3-diacylglucosamine and 2,3-diacylglucosamine-1-phosphate to form lipid A disaccharide, a precursor of lipid A, a phosphorylated glycolipid that anchors the lipopolysaccharide to the outer membrane of the cell. This is Lipid-A-disaccharide synthase from Escherichia coli (strain ATCC 8739 / DSM 1576 / NBRC 3972 / NCIMB 8545 / WDCM 00012 / Crooks).